We begin with the raw amino-acid sequence, 219 residues long: ATP synthase F(0) complex subunit a (219 aa).

Transmembrane regions (helical) follow at residues 4–24, 61–81, 90–110, 124–144, 172–192, and 194–214; these read PTYL…ILFP, WAAL…LGLL, QLSL…IIGM, EGTP…SLFI, FVLL…LFLL, and LLEI…LSLY.

Belongs to the ATPase A chain family. Component of the ATP synthase complex composed at least of ATP5F1A/subunit alpha, ATP5F1B/subunit beta, ATP5MC1/subunit c (homooctomer), MT-ATP6/subunit a, MT-ATP8/subunit 8, ATP5ME/subunit e, ATP5MF/subunit f, ATP5MG/subunit g, ATP5MK/subunit k, ATP5MJ/subunit j, ATP5F1C/subunit gamma, ATP5F1D/subunit delta, ATP5F1E/subunit epsilon, ATP5PF/subunit F6, ATP5PB/subunit b, ATP5PD/subunit d, ATP5PO/subunit OSCP. ATP synthase complex consists of a soluble F(1) head domain (subunits alpha(3) and beta(3)) - the catalytic core - and a membrane F(0) domain - the membrane proton channel (subunits c, a, 8, e, f, g, k and j). These two domains are linked by a central stalk (subunits gamma, delta, and epsilon) rotating inside the F1 region and a stationary peripheral stalk (subunits F6, b, d, and OSCP). Interacts with DNAJC30; interaction is direct.

The protein localises to the mitochondrion inner membrane. The enzyme catalyses H(+)(in) = H(+)(out). In terms of biological role, subunit a, of the mitochondrial membrane ATP synthase complex (F(1)F(0) ATP synthase or Complex V) that produces ATP from ADP in the presence of a proton gradient across the membrane which is generated by electron transport complexes of the respiratory chain. ATP synthase complex consist of a soluble F(1) head domain - the catalytic core - and a membrane F(1) domain - the membrane proton channel. These two domains are linked by a central stalk rotating inside the F(1) region and a stationary peripheral stalk. During catalysis, ATP synthesis in the catalytic domain of F(1) is coupled via a rotary mechanism of the central stalk subunits to proton translocation. With the subunit c (ATP5MC1), forms the proton-conducting channel in the F(0) domain, that contains two crucial half-channels (inlet and outlet) that facilitate proton movement from the mitochondrial intermembrane space (IMS) into the matrix. Protons are taken up via the inlet half-channel and released through the outlet half-channel, following a Grotthuss mechanism. The protein is ATP synthase F(0) complex subunit a of Oncorhynchus masou (Cherry salmon).